Reading from the N-terminus, the 404-residue chain is Imidazolonepropionase (404 aa).

Residues His-73 and His-75 each coordinate Fe(3+). Residues His-73 and His-75 each contribute to the Zn(2+) site. Residues Arg-82, Tyr-145, and His-178 each contribute to the 4-imidazolone-5-propanoate site. Tyr-145 contributes to the N-formimidoyl-L-glutamate binding site. His-243 contributes to the Fe(3+) binding site. His-243 serves as a coordination point for Zn(2+). Gln-246 serves as a coordination point for 4-imidazolone-5-propanoate. Position 318 (Asp-318) interacts with Fe(3+). Asp-318 contacts Zn(2+). N-formimidoyl-L-glutamate-binding residues include Asn-320 and Gly-322. Ser-323 contacts 4-imidazolone-5-propanoate.

The protein belongs to the metallo-dependent hydrolases superfamily. HutI family. It depends on Zn(2+) as a cofactor. Requires Fe(3+) as cofactor.

It is found in the cytoplasm. The enzyme catalyses 4-imidazolone-5-propanoate + H2O = N-formimidoyl-L-glutamate. It participates in amino-acid degradation; L-histidine degradation into L-glutamate; N-formimidoyl-L-glutamate from L-histidine: step 3/3. Its function is as follows. Catalyzes the hydrolytic cleavage of the carbon-nitrogen bond in imidazolone-5-propanoate to yield N-formimidoyl-L-glutamate. It is the third step in the universal histidine degradation pathway. The polypeptide is Imidazolonepropionase (Bradyrhizobium sp. (strain BTAi1 / ATCC BAA-1182)).